We begin with the raw amino-acid sequence, 265 residues long: Metal-activated transcriptional activator protein AMT1 (265 aa).

Residues Met-1–Pro-40 constitute a DNA-binding region (copper-fist). Zn(2+) is bound by residues Cys-11, Cys-14, Cys-23, and His-25. The interval Arg-103–Ala-129 is disordered. Positions Asn-119–Pro-128 are enriched in low complexity.

The protein resides in the nucleus. Trans-acting regulatory protein that activates transcription of the MT genes (metallothionein) in response to copper or silver ions. This chain is Metal-activated transcriptional activator protein AMT1 (AMT1), found in Candida glabrata (strain ATCC 2001 / BCRC 20586 / JCM 3761 / NBRC 0622 / NRRL Y-65 / CBS 138) (Yeast).